A 356-amino-acid polypeptide reads, in one-letter code: tRNA-splicing endonuclease subunit SEN2 (356 aa).

Active-site residues include Y268, H276, and K307.

Belongs to the tRNA-intron endonuclease family. In terms of assembly, heterotetramer composed of SEN2, SEN15, SEN34 and SEN54. Interacts directly with SEN54.

It carries out the reaction pretRNA = a 3'-half-tRNA molecule with a 5'-OH end + a 5'-half-tRNA molecule with a 2',3'-cyclic phosphate end + an intron with a 2',3'-cyclic phosphate and a 5'-hydroxyl terminus.. Functionally, constitutes one of the two catalytic subunit of the tRNA-splicing endonuclease complex, a complex responsible for identification and cleavage of the splice sites in pre-tRNA. It cleaves pre-tRNA at the 5'- and 3'-splice sites to release the intron. The products are an intron and two tRNA half-molecules bearing 2',3'-cyclic phosphate and 5'-OH termini. There are no conserved sequences at the splice sites, but the intron is invariably located at the same site in the gene, placing the splice sites an invariant distance from the constant structural features of the tRNA body. This subunit may anchor the endonuclease complex to the nuclear membrane. Probably carries the active site for 5'-splice site cleavage. This is tRNA-splicing endonuclease subunit SEN2 (SEN2) from Eremothecium gossypii (strain ATCC 10895 / CBS 109.51 / FGSC 9923 / NRRL Y-1056) (Yeast).